Consider the following 208-residue polypeptide: Protein-L-isoaspartate O-methyltransferase (208 aa).

Residue Ser-59 is part of the active site.

The protein belongs to the methyltransferase superfamily. L-isoaspartyl/D-aspartyl protein methyltransferase family.

It localises to the cytoplasm. It carries out the reaction [protein]-L-isoaspartate + S-adenosyl-L-methionine = [protein]-L-isoaspartate alpha-methyl ester + S-adenosyl-L-homocysteine. In terms of biological role, catalyzes the methyl esterification of L-isoaspartyl residues in peptides and proteins that result from spontaneous decomposition of normal L-aspartyl and L-asparaginyl residues. It plays a role in the repair and/or degradation of damaged proteins. The polypeptide is Protein-L-isoaspartate O-methyltransferase (Yersinia enterocolitica serotype O:8 / biotype 1B (strain NCTC 13174 / 8081)).